The sequence spans 381 residues: MASQGQRVSWGDESTKRRGRSNSRGRKNNDIPLSFFNPITLEQGSKFWDLCPRDFVPKGIGNKDQQIGYWNRQTRYRMVKGRRKNLPEKWFFYYLGTGPHADAKFKQKLDGVVWVARGDSMTKPTTLGTRGTNNESKALKFDVKVPSEFHLEVNQLRDNSRSRSQSRSQSRNRSQSRGRQLSNNKKDDNVEQAVLAALKKLGVDTEKQQRSRSKSKERSSSKTRDTTPKNENKHTWKRTAGKGDVTKFYGARSSSANFGDSDLVANGNGAKHYPQLAECVPSVSSILFGSHWTAKEDGDQIEVTFTHKYHLPKDDPKTGQFLQQINAYARPSEVAKEQRQRKARSKSVERVEQEVVPDALTENYTDVFDDTQVEIIDEVTN.

Disordered stretches follow at residues 1 to 29 (MASQ…RKNN) and 152 to 239 (EVNQ…WKRT). Serine 9 bears the Phosphoserine; by host mark. Residues 17–26 (RRGRSNSRGR) are compositionally biased toward basic residues. The 123-residue stretch at 31–153 (IPLSFFNPIT…KVPSEFHLEV (123 aa)) folds into the CoV N NTD domain. Residues 33-159 (LSFFNPITLE…HLEVNQLRDN (127 aa)) form an RNA-binding region. Residues 154–183 (NQLRDNSRSRSQSRSQSRNRSQSRGRQLSN) show a composition bias toward low complexity. The segment covering 201 to 234 (LGVDTEKQQRSRSKSKERSSSKTRDTTPKNENKH) has biased composition (basic and acidic residues). One can recognise a CoV N CTD domain in the interval 223-336 (TRDTTPKNEN…AYARPSEVAK (114 aa)). The segment at 230–333 (NENKHTWKRT…QINAYARPSE (104 aa)) is dimerization. Serine 253 and serine 255 each carry phosphoserine; by host. Positions 331-353 (PSEVAKEQRQRKARSKSVERVEQ) are disordered. The segment covering 333–353 (EVAKEQRQRKARSKSVERVEQ) has biased composition (basic and acidic residues).

The protein belongs to the alphacoronavirus nucleocapsid protein family. In terms of assembly, homooligomer. Both monomeric and oligomeric forms interact with RNA. Interacts with protein M. Interacts with NSP3; this interaction serves to tether the genome to the newly translated replicase-transcriptase complex at a very early stage of infection. In terms of processing, ADP-ribosylated. The ADP-ribosylation is retained in the virion during infection. Phosphorylated on serine and threonine residues.

It localises to the virion. The protein resides in the host endoplasmic reticulum-Golgi intermediate compartment. It is found in the host Golgi apparatus. Its function is as follows. Packages the positive strand viral genome RNA into a helical ribonucleocapsid (RNP) and plays a fundamental role during virion assembly through its interactions with the viral genome and membrane protein M. Plays an important role in enhancing the efficiency of subgenomic viral RNA transcription as well as viral replication. This chain is Nucleoprotein, found in Canis lupus familiaris (Dog).